The sequence spans 197 residues: MLLIGITGMPGAGKSSAYEIAKKYNLPIVSMGDVVRYETKKRGLELTPENVGNTAIKLREEFGNEAIAVACLKYIEENLKDKEIVIVEGIRSLYEVNYFRKHKPLVLIAIHSSPLTRFERLKKRGREDDSANWEVFVERDLRELGFSIGHAIALADFVVVNEKSFEDCLNQLDNILQEILNNLEKYKKYNFIYETLR.

Residue 8–15 (GMPGAGKS) participates in ATP binding.

It belongs to the UPF0200 family.

The protein is UPF0200 protein MJ1399 of Methanocaldococcus jannaschii (strain ATCC 43067 / DSM 2661 / JAL-1 / JCM 10045 / NBRC 100440) (Methanococcus jannaschii).